The primary structure comprises 237 residues: Riboflavin kinase (237 aa).

Residues 1 to 23 form a disordered region; the sequence is MSLPNPDNRPLLIGPPTGPEAPF. Thr-46 and Asn-48 together coordinate Mg(2+). Residues 82–126 are disordered; sequence VLYQKPPTSEPVMMDPVQQQQQQQQQQRNQQQQQEGGVGSAQQEK. Low complexity predominate over residues 99-115; that stretch reads QQQQQQQQQQRNQQQQQ. The Nucleophile role is filled by Glu-158.

It belongs to the flavokinase family. It depends on Zn(2+) as a cofactor. Mg(2+) is required as a cofactor.

The catalysed reaction is riboflavin + ATP = FMN + ADP + H(+). It functions in the pathway cofactor biosynthesis; FMN biosynthesis; FMN from riboflavin (ATP route): step 1/1. In terms of biological role, catalyzes the phosphorylation of riboflavin (vitamin B2) to form flavin mononucleotide (FMN) coenzyme. This Neurospora crassa (strain ATCC 24698 / 74-OR23-1A / CBS 708.71 / DSM 1257 / FGSC 987) protein is Riboflavin kinase (fmn1).